Here is a 292-residue protein sequence, read N- to C-terminus: Poly-beta-1,6-N-acetyl-D-glucosamine N-deacetylase (292 aa).

The first 28 residues, 1 to 28 (MKYRKFIILVLSILIILPVSTLDGHHIA), serve as a signal peptide directing secretion. The NodB homology domain occupies 114–292 (RSVWINFDDM…WDGFHEKDET (179 aa)).

This sequence belongs to the polysaccharide deacetylase family.

It localises to the secreted. Its subcellular location is the cell wall. Catalyzes the N-deacetylation of poly-beta-1,6-N-acetyl-D-glucosamine (PNAG, also referred to as PIA), a biofilm adhesin polysaccharide. N-deacetylation is crucial for attachment of the polysaccharide to the bacterial cell surface; it leads to the introduction of positive charges in the otherwise neutral PIA polymer, allowing electrostatic interactions. The polypeptide is Poly-beta-1,6-N-acetyl-D-glucosamine N-deacetylase (icaB) (Staphylococcus aureus (strain COL)).